Consider the following 79-residue polypeptide: Small ribosomal subunit protein bS18 (79 aa).

It belongs to the bacterial ribosomal protein bS18 family. In terms of assembly, part of the 30S ribosomal subunit. Forms a tight heterodimer with protein bS6.

In terms of biological role, binds as a heterodimer with protein bS6 to the central domain of the 16S rRNA, where it helps stabilize the platform of the 30S subunit. The sequence is that of Small ribosomal subunit protein bS18 from Rhodopseudomonas palustris (strain BisB5).